A 256-amino-acid polypeptide reads, in one-letter code: MNDPRKGADAEPTTHFGYQNVPESQKAKKVAEVFHSVAAKYDLMNDLMSGGIHRLWKRFTIELSGVRSGNRVLDIAGGTGDLTRQFSRLVGPTGEVVLADINASMLKVGRDKLLDKGVSGNVSFVQADAEKLPFPDNHFDCVTIAFGLRNVTHKDEAIRSMLRVLKPGGRLLVLEFSKPSSNLLSKAYDAYSFSLLPLMGKLVTNDSESYRYLAESIRMHPDQETLKAMMVEAGFDRVTYHNMTGGIVALHRGIKP.

S-adenosyl-L-methionine-binding positions include Thr79, Asp100, and 128-129; that span reads DA.

This sequence belongs to the class I-like SAM-binding methyltransferase superfamily. MenG/UbiE family.

The enzyme catalyses a 2-demethylmenaquinol + S-adenosyl-L-methionine = a menaquinol + S-adenosyl-L-homocysteine + H(+). It carries out the reaction a 2-methoxy-6-(all-trans-polyprenyl)benzene-1,4-diol + S-adenosyl-L-methionine = a 5-methoxy-2-methyl-3-(all-trans-polyprenyl)benzene-1,4-diol + S-adenosyl-L-homocysteine + H(+). The protein operates within quinol/quinone metabolism; menaquinone biosynthesis; menaquinol from 1,4-dihydroxy-2-naphthoate: step 2/2. It functions in the pathway cofactor biosynthesis; ubiquinone biosynthesis. Its function is as follows. Methyltransferase required for the conversion of demethylmenaquinol (DMKH2) to menaquinol (MKH2) and the conversion of 2-polyprenyl-6-methoxy-1,4-benzoquinol (DDMQH2) to 2-polyprenyl-3-methyl-6-methoxy-1,4-benzoquinol (DMQH2). The chain is Ubiquinone/menaquinone biosynthesis C-methyltransferase UbiE from Pseudomonas aeruginosa (strain LESB58).